The primary structure comprises 393 residues: Ig heavy chain C region (393 aa).

Ig-like domains are found at residues 63–157, 168–260, and 270–370; these read PTVI…RNIT, PVIK…ASIH, and PSVS…RTVN. Asn-119, Asn-155, Asn-200, Asn-230, Asn-329, Asn-366, Asn-370, and Asn-380 each carry an N-linked (GlcNAc...) asparagine glycan.

This is Ig heavy chain C region from Heterodontus francisci (Horn shark).